The chain runs to 325 residues: MATVKKVLPRRLVGLATLRAVSTSSVGTFPKQVKIVEVGPRDGLQNEKNIVPTPVKIKLIDMLSEAGLPVVEATSFVSPKWVPQMADHAEVLKGIQKFPGVNYPVLTPNFKGFQAAVAAGAKEVAIFGAASELFTKKNINCSIDESLQRFDEILKAARAAGISVRGYVSCVLGCPYEGKISPAKVAEVTKKLYSMGCYEISLGDTIGVGTPGAMKDMLSAVLQEVPVTALAVHCHDTYGQALANTLTALQMGVSVMDSSVAGLGGCPYAQGASGNLATEDLVYMLAGLGIHTGVNLQKLLEAGAFICQALNRRTNSKVAQATCKL.

A mitochondrion-targeting transit peptide spans 1–27 (MATVKKVLPRRLVGLATLRAVSTSSVG). The region spanning 33 to 300 (VKIVEVGPRD…HTGVNLQKLL (268 aa)) is the Pyruvate carboxyltransferase domain. Residue R41 coordinates substrate. D42 is a binding site for a divalent metal cation. At K48 the chain carries N6-acetyllysine; alternate. K48 is subject to N6-succinyllysine; alternate. Position 111 is an N6-acetyllysine (K111). 2 positions are modified to N6-acetyllysine; alternate: K137 and K179. N6-succinyllysine; alternate occurs at positions 137 and 179. 2 residues coordinate a divalent metal cation: H233 and H235. C266 is an active-site residue. N275 is an a divalent metal cation binding site. The Microbody targeting signal signature appears at 323–325 (CKL). K324 is modified (N6-acetyllysine).

This sequence belongs to the HMG-CoA lyase family. Homodimer; disulfide-linked. Can also form homotetramers.

The protein localises to the mitochondrion matrix. It localises to the peroxisome. The catalysed reaction is (3S)-3-hydroxy-3-methylglutaryl-CoA = acetoacetate + acetyl-CoA. It functions in the pathway metabolic intermediate metabolism; (S)-3-hydroxy-3-methylglutaryl-CoA degradation; acetoacetate from (S)-3-hydroxy-3-methylglutaryl-CoA: step 1/1. Mitochondrial 3-hydroxy-3-methylglutaryl-CoA lyase that catalyzes a cation-dependent cleavage of (S)-3-hydroxy-3-methylglutaryl-CoA into acetyl-CoA and acetoacetate, a key step in ketogenesis. Terminal step in leucine catabolism. Ketone bodies (beta-hydroxybutyrate, acetoacetate and acetone) are essential as an alternative source of energy to glucose, as lipid precursors and as regulators of metabolism. The protein is Hydroxymethylglutaryl-CoA lyase, mitochondrial (HMGCL) of Bos taurus (Bovine).